The chain runs to 645 residues: 1-deoxy-D-xylulose-5-phosphate synthase (645 aa).

Residues His-79 and 120–122 each bind thiamine diphosphate; that span reads AHS. Asp-155 lines the Mg(2+) pocket. Thiamine diphosphate is bound by residues 156 to 157, Asn-184, Tyr-293, and Glu-375; that span reads GA. Asn-184 contributes to the Mg(2+) binding site.

The protein belongs to the transketolase family. DXPS subfamily. Homodimer. Requires Mg(2+) as cofactor. It depends on thiamine diphosphate as a cofactor.

It carries out the reaction D-glyceraldehyde 3-phosphate + pyruvate + H(+) = 1-deoxy-D-xylulose 5-phosphate + CO2. The protein operates within metabolic intermediate biosynthesis; 1-deoxy-D-xylulose 5-phosphate biosynthesis; 1-deoxy-D-xylulose 5-phosphate from D-glyceraldehyde 3-phosphate and pyruvate: step 1/1. In terms of biological role, catalyzes the acyloin condensation reaction between C atoms 2 and 3 of pyruvate and glyceraldehyde 3-phosphate to yield 1-deoxy-D-xylulose-5-phosphate (DXP). This Ruegeria sp. (strain TM1040) (Silicibacter sp.) protein is 1-deoxy-D-xylulose-5-phosphate synthase.